The primary structure comprises 162 residues: Caveolin-2 (162 aa).

The Cytoplasmic segment spans residues 1 to 86 (MGLETEKADV…FEISKYVIYK (86 aa)). Phosphotyrosine; by SRC is present on tyrosine 19. A phosphoserine mark is found at serine 20 and serine 23. Position 27 is a phosphotyrosine; by SRC (tyrosine 27). Phosphoserine is present on serine 36. The segment at residues 87–107 (FLTVFLAIPLAFIAGILFATL) is an intramembrane region (helical). The Cytoplasmic segment spans residues 108 to 162 (SCLHIWILMPFVKTCLMVLPSVQTIWKSVTDVVIGPLCTSVGRIFSSVSMQLSHD).

The protein belongs to the caveolin family. As to quaternary structure, monomer or homodimer. Interacts with CAV1; the interaction forms a stable heterooligomeric complex that is required for targeting to lipid rafts and for caveolae formation. Tyrosine phosphorylated forms do not form heterooligomers with the Tyr-19-phosphorylated form existing as a monomer or dimer and the Tyr-27-form as a monomer only. Interacts (tyrosine phosphorylated form) with the SH2 domain-containing proteins, RASA1, NCK1 and SRC. Interacts (tyrosine phosphorylated form) with INSR; the interaction (Tyr-27-phosphorylated form) is increased on insulin stimulation. Interacts (Tyr-19-phosphorylated form) with MAPK1 (phosphorylated form); the interaction, promoted by insulin, leads to nuclear location and MAPK1 activation. Interacts with STAT3; the interaction is increased on insulin-induced tyrosine phosphorylation leading to STAT activation. In terms of processing, phosphorylated on serine and tyrosine residues. CAV1 promotes phosphorylation on Ser-23 which targets the complex to the plasma membrane, lipid rafts and caveolae. Phosphorylation on Ser-36 appears to modulate mitosis in endothelial cells. Phosphorylation on both Tyr-19 and Tyr-27 is required for insulin-induced 'Ser-727' phosphorylation of STAT3 and its activation. Phosphorylation on Tyr-19 is required for insulin-induced phosphorylation of MAPK1 and DNA binding of STAT3. Tyrosine phosphorylation is induced by both EGF and insulin. In terms of tissue distribution, in the retina, mainly expressed in vessels, but also diffuse expression in the inner and outer plexiform layers and in the inner nuclear layer.

It is found in the nucleus. The protein localises to the cytoplasm. Its subcellular location is the golgi apparatus membrane. The protein resides in the cell membrane. It localises to the membrane. It is found in the caveola. May act as a scaffolding protein within caveolar membranes. Interacts directly with G-protein alpha subunits and can functionally regulate their activity. Acts as an accessory protein in conjunction with CAV1 in targeting to lipid rafts and driving caveolae formation. The Ser-36 phosphorylated form has a role in modulating mitosis in endothelial cells. Positive regulator of cellular mitogenesis of the MAPK signaling pathway. Required for the insulin-stimulated nuclear translocation and activation of MAPK1 and STAT3, and the subsequent regulation of cell cycle progression. The polypeptide is Caveolin-2 (Cav2) (Rattus norvegicus (Rat)).